The chain runs to 407 residues: Argininosuccinate synthase (407 aa).

ATP-binding positions include 10-18 and A37; that span reads AYSGGLDTS. Y88 and S93 together coordinate L-citrulline. Position 118 (G118) interacts with ATP. L-aspartate is bound by residues T120, N124, and D125. N124 contributes to the L-citrulline binding site. Residues R128, S180, S189, E265, and Y277 each coordinate L-citrulline.

It belongs to the argininosuccinate synthase family. Type 1 subfamily. Homotetramer.

The protein resides in the cytoplasm. It carries out the reaction L-citrulline + L-aspartate + ATP = 2-(N(omega)-L-arginino)succinate + AMP + diphosphate + H(+). It participates in amino-acid biosynthesis; L-arginine biosynthesis; L-arginine from L-ornithine and carbamoyl phosphate: step 2/3. This chain is Argininosuccinate synthase, found in Alcanivorax borkumensis (strain ATCC 700651 / DSM 11573 / NCIMB 13689 / SK2).